The chain runs to 430 residues: Adenylosuccinate synthetase (430 aa).

Residues 12–18 (GDEGKGK) and 40–42 (GHT) contribute to the GTP site. The active-site Proton acceptor is the aspartate 13. 2 residues coordinate Mg(2+): aspartate 13 and glycine 40. Residues 13–16 (DEGK), 38–41 (NAGH), threonine 128, arginine 142, glutamine 223, threonine 238, and arginine 302 contribute to the IMP site. Histidine 41 functions as the Proton donor in the catalytic mechanism. Position 298–304 (298–304 (TTTGRPR)) interacts with substrate. GTP is bound by residues arginine 304, 330-332 (SID), and 412-414 (SVG).

It belongs to the adenylosuccinate synthetase family. As to quaternary structure, homodimer. Mg(2+) is required as a cofactor.

It is found in the cytoplasm. It catalyses the reaction IMP + L-aspartate + GTP = N(6)-(1,2-dicarboxyethyl)-AMP + GDP + phosphate + 2 H(+). It participates in purine metabolism; AMP biosynthesis via de novo pathway; AMP from IMP: step 1/2. Functionally, plays an important role in the de novo pathway of purine nucleotide biosynthesis. Catalyzes the first committed step in the biosynthesis of AMP from IMP. This chain is Adenylosuccinate synthetase, found in Streptococcus pyogenes serotype M1.